The sequence spans 286 residues: Pantothenate synthetase (286 aa).

Position 30–37 (30–37 (MGFLHEGH)) interacts with ATP. His37 serves as the catalytic Proton donor. Gln61 contacts (R)-pantoate. Beta-alanine is bound at residue Gln61. Residue 147 to 150 (GLKD) coordinates ATP. Gln153 contributes to the (R)-pantoate binding site. Residues Val176 and 184–187 (KSSR) contribute to the ATP site.

Belongs to the pantothenate synthetase family. As to quaternary structure, homodimer.

The protein localises to the cytoplasm. It catalyses the reaction (R)-pantoate + beta-alanine + ATP = (R)-pantothenate + AMP + diphosphate + H(+). It functions in the pathway cofactor biosynthesis; (R)-pantothenate biosynthesis; (R)-pantothenate from (R)-pantoate and beta-alanine: step 1/1. Catalyzes the condensation of pantoate with beta-alanine in an ATP-dependent reaction via a pantoyl-adenylate intermediate. This chain is Pantothenate synthetase, found in Bacillus subtilis (strain 168).